A 572-amino-acid chain; its full sequence is Dihydroxy-acid dehydratase (572 aa).

Asp78 contacts Mg(2+). A [2Fe-2S] cluster-binding site is contributed by Cys119. Residues Asp120 and Lys121 each contribute to the Mg(2+) site. Lys121 is subject to N6-carboxylysine. Position 192 (Cys192) interacts with [2Fe-2S] cluster. Glu459 lines the Mg(2+) pocket. The active-site Proton acceptor is Ser485.

It belongs to the IlvD/Edd family. Homodimer. [2Fe-2S] cluster is required as a cofactor. Requires Mg(2+) as cofactor.

The catalysed reaction is (2R)-2,3-dihydroxy-3-methylbutanoate = 3-methyl-2-oxobutanoate + H2O. The enzyme catalyses (2R,3R)-2,3-dihydroxy-3-methylpentanoate = (S)-3-methyl-2-oxopentanoate + H2O. Its pathway is amino-acid biosynthesis; L-isoleucine biosynthesis; L-isoleucine from 2-oxobutanoate: step 3/4. It participates in amino-acid biosynthesis; L-valine biosynthesis; L-valine from pyruvate: step 3/4. Functions in the biosynthesis of branched-chain amino acids. Catalyzes the dehydration of (2R,3R)-2,3-dihydroxy-3-methylpentanoate (2,3-dihydroxy-3-methylvalerate) into 2-oxo-3-methylpentanoate (2-oxo-3-methylvalerate) and of (2R)-2,3-dihydroxy-3-methylbutanoate (2,3-dihydroxyisovalerate) into 2-oxo-3-methylbutanoate (2-oxoisovalerate), the penultimate precursor to L-isoleucine and L-valine, respectively. In Helicobacter hepaticus (strain ATCC 51449 / 3B1), this protein is Dihydroxy-acid dehydratase.